The following is a 57-amino-acid chain: Sperm histone (57 aa).

The tract at residues 1–57 (MARYRRTRTRSRSRRRRRSRRRRSSRRRRYGRSRRSYRSVGRRRRRYGRRRRRRRRY) is disordered. Residue Thr9 is modified to Phosphothreonine.

The protein belongs to the protamine P1 family. In terms of tissue distribution, testis.

It localises to the nucleus. It is found in the chromosome. Functionally, protamines substitute for histones in the chromatin of sperm during the haploid phase of spermatogenesis. They compact sperm DNA into a highly condensed, stable and inactive complex. The chain is Sperm histone from Coturnix japonica (Japanese quail).